A 295-amino-acid polypeptide reads, in one-letter code: Probable phosphoglycerate mutase PMU1 (295 aa).

Histidine 61 functions as the Tele-phosphohistidine intermediate in the catalytic mechanism. The active-site Proton donor/acceptor is the glutamate 170.

It belongs to the phosphoglycerate mutase family.

The protein resides in the cytoplasm. Its subcellular location is the nucleus. Functionally, probable phosphomutase that may have a function related to the manipulation of phosphate groups on carbohydrates. Reduces trehalose-6-phosphate levels when overexpressed in TPS2-deleted cells. Reduces 5'-Phosphoribosyl-4-carboxamide-5-aminoimidazole (AICAR) levels, a metabolic intermediate at the crossroads between AMP and histidine biosynthesis pathways, when overexpressed in a ADE3-ADE16-ADE17 triple deletant. This Saccharomyces cerevisiae (strain ATCC 204508 / S288c) (Baker's yeast) protein is Probable phosphoglycerate mutase PMU1.